Consider the following 225-residue polypeptide: NAD(P)H-quinone oxidoreductase subunit K, chloroplastic (225 aa).

Residues Cys-43, Cys-44, Cys-108, and Cys-139 each coordinate [4Fe-4S] cluster.

The protein belongs to the complex I 20 kDa subunit family. In terms of assembly, NDH is composed of at least 16 different subunits, 5 of which are encoded in the nucleus. The cofactor is [4Fe-4S] cluster.

The protein resides in the plastid. The protein localises to the chloroplast thylakoid membrane. It catalyses the reaction a plastoquinone + NADH + (n+1) H(+)(in) = a plastoquinol + NAD(+) + n H(+)(out). The enzyme catalyses a plastoquinone + NADPH + (n+1) H(+)(in) = a plastoquinol + NADP(+) + n H(+)(out). NDH shuttles electrons from NAD(P)H:plastoquinone, via FMN and iron-sulfur (Fe-S) centers, to quinones in the photosynthetic chain and possibly in a chloroplast respiratory chain. The immediate electron acceptor for the enzyme in this species is believed to be plastoquinone. Couples the redox reaction to proton translocation, and thus conserves the redox energy in a proton gradient. The protein is NAD(P)H-quinone oxidoreductase subunit K, chloroplastic of Lolium perenne (Perennial ryegrass).